Here is a 341-residue protein sequence, read N- to C-terminus: Ectoine-binding periplasmic protein TeaA (341 aa).

The N-terminal stretch at 1–25 (MKAYKLLTTASIGALMLGMSTAAYS) is a signal peptide. L-ectoine contacts are provided by glutamate 34, arginine 169, asparagine 209, tryptophan 213, and phenylalanine 234.

This sequence belongs to the bacterial solute-binding protein 7 family. As to quaternary structure, monomer. The complex comprises the extracytoplasmic solute receptor protein TeaA, and the two transmembrane proteins TeaB and TeaC.

The protein localises to the periplasm. Functionally, part of the tripartite ATP-independent periplasmic (TRAP) transport system TeaABC involved in the uptake of ectoine and hydroxyectoine in response to osmotic upshock. Probably functions as a recovery system for synthesized ectoine that leaks out of the cell. Binds ectoine with high affinity. Affinity for hydroxyectoine is approximately 20-fold lower. The sequence is that of Ectoine-binding periplasmic protein TeaA (teaA) from Halomonas elongata (strain ATCC 33173 / DSM 2581 / NBRC 15536 / NCIMB 2198 / 1H9).